Here is a 69-residue protein sequence, read N- to C-terminus: DNA-directed RNA polymerase subunit omega (69 aa).

Belongs to the RNA polymerase subunit omega family. As to quaternary structure, the RNAP catalytic core consists of 2 alpha, 1 beta, 1 beta' and 1 omega subunit. When a sigma factor is associated with the core the holoenzyme is formed, which can initiate transcription.

The enzyme catalyses RNA(n) + a ribonucleoside 5'-triphosphate = RNA(n+1) + diphosphate. Its function is as follows. Promotes RNA polymerase assembly. Latches the N- and C-terminal regions of the beta' subunit thereby facilitating its interaction with the beta and alpha subunits. The chain is DNA-directed RNA polymerase subunit omega from Heliobacterium modesticaldum (strain ATCC 51547 / Ice1).